A 162-amino-acid polypeptide reads, in one-letter code: EF-hand calcium-binding domain-containing protein 11 (162 aa).

EF-hand domains follow at residues 18 to 53 (SERR…LFGY), 91 to 126 (LYRN…VAPK), and 127 to 162 (LPSR…GKAK). Aspartate 140, aspartate 142, aspartate 144, histidine 146, and aspartate 151 together coordinate Ca(2+).

The chain is EF-hand calcium-binding domain-containing protein 11 (Efcab11) from Rattus norvegicus (Rat).